Here is a 630-residue protein sequence, read N- to C-terminus: Plastin-3 (630 aa).

EF-hand domains lie at D12–P47 and K52–S87. Positions 25, 27, 29, 36, 65, 67, 69, 71, and 76 each coordinate Ca(2+). 2 actin-binding regions span residues T109–K382 and P383–M627. 2 Calponin-homology (CH) domains span residues E123 to L239 and L267 to P378. S268, S293, S326, and S339 each carry phosphoserine. Phosphothreonine is present on T391. 2 consecutive Calponin-homology (CH) domains span residues T397–T506 and K518–M627.

In terms of assembly, monomer.

It is found in the cytoplasm. Its function is as follows. Actin-bundling protein. The protein is Plastin-3 (Pls3) of Rattus norvegicus (Rat).